A 283-amino-acid polypeptide reads, in one-letter code: ATP phosphoribosyltransferase (283 aa).

It belongs to the ATP phosphoribosyltransferase family. Long subfamily. Requires Mg(2+) as cofactor.

It localises to the cytoplasm. It carries out the reaction 1-(5-phospho-beta-D-ribosyl)-ATP + diphosphate = 5-phospho-alpha-D-ribose 1-diphosphate + ATP. The protein operates within amino-acid biosynthesis; L-histidine biosynthesis; L-histidine from 5-phospho-alpha-D-ribose 1-diphosphate: step 1/9. With respect to regulation, feedback inhibited by histidine. Its function is as follows. Catalyzes the condensation of ATP and 5-phosphoribose 1-diphosphate to form N'-(5'-phosphoribosyl)-ATP (PR-ATP). Has a crucial role in the pathway because the rate of histidine biosynthesis seems to be controlled primarily by regulation of HisG enzymatic activity. The sequence is that of ATP phosphoribosyltransferase from Bifidobacterium longum subsp. infantis (strain ATCC 15697 / DSM 20088 / JCM 1222 / NCTC 11817 / S12).